Here is a 192-residue protein sequence, read N- to C-terminus: Ion-translocating oxidoreductase complex subunit B (192 aa).

Residues 1-26 (MNTIWIAVGALTFLGLVFGAILGYAS) form a hydrophobic region. The 4Fe-4S domain occupies 32 to 91 (EDDPVVEKIDAILPQSQCGQCGYPGCRPYAEAVGLQGEKINRCAPGGEAVMLKIADLLNV). [4Fe-4S] cluster-binding residues include cysteine 49, cysteine 52, cysteine 57, cysteine 74, cysteine 117, cysteine 120, cysteine 123, cysteine 127, cysteine 147, cysteine 150, cysteine 153, and cysteine 157. 4Fe-4S ferredoxin-type domains follow at residues 108–137 (MLAVIDENHCIGCTKCIQACPVDAIVGATR) and 138–167 (AMHTVMSDLCTGCNLCVDPCPTHCIELRPV).

It belongs to the 4Fe4S bacterial-type ferredoxin family. RnfB subfamily. The complex is composed of six subunits: RsxA, RsxB, RsxC, RsxD, RsxE and RsxG. It depends on [4Fe-4S] cluster as a cofactor.

It localises to the cell inner membrane. Part of a membrane-bound complex that couples electron transfer with translocation of ions across the membrane. Required to maintain the reduced state of SoxR. The polypeptide is Ion-translocating oxidoreductase complex subunit B (Salmonella arizonae (strain ATCC BAA-731 / CDC346-86 / RSK2980)).